The chain runs to 193 residues: Large ribosomal subunit protein uL18 (193 aa).

It belongs to the universal ribosomal protein uL18 family. In terms of assembly, part of the 50S ribosomal subunit. Contacts the 5S and 23S rRNAs.

Functionally, this is one of the proteins that bind and probably mediate the attachment of the 5S RNA into the large ribosomal subunit, where it forms part of the central protuberance. In Methanococcus vannielii (strain ATCC 35089 / DSM 1224 / JCM 13029 / OCM 148 / SB), this protein is Large ribosomal subunit protein uL18.